Here is a 92-residue protein sequence, read N- to C-terminus: Putative protein IntG (92 aa).

Belongs to the 'phage' integrase family.

This Escherichia coli (strain K12) protein is Putative protein IntG (intG).